Consider the following 139-residue polypeptide: Large ribosomal subunit protein bL17 (139 aa).

This sequence belongs to the bacterial ribosomal protein bL17 family. As to quaternary structure, part of the 50S ribosomal subunit. Contacts protein L32.

The protein is Large ribosomal subunit protein bL17 of Sphingopyxis alaskensis (strain DSM 13593 / LMG 18877 / RB2256) (Sphingomonas alaskensis).